The chain runs to 122 residues: Large ribosomal subunit protein bL19 (122 aa).

It belongs to the bacterial ribosomal protein bL19 family.

Functionally, this protein is located at the 30S-50S ribosomal subunit interface and may play a role in the structure and function of the aminoacyl-tRNA binding site. This Mycoplasmoides gallisepticum (strain R(low / passage 15 / clone 2)) (Mycoplasma gallisepticum) protein is Large ribosomal subunit protein bL19.